The following is an 88-amino-acid chain: Small ribosomal subunit protein uS15c (88 aa).

This sequence belongs to the universal ribosomal protein uS15 family. As to quaternary structure, part of the 30S ribosomal subunit.

It localises to the plastid. It is found in the chloroplast. In Angiopteris evecta (Mule's foot fern), this protein is Small ribosomal subunit protein uS15c (rps15).